A 155-amino-acid chain; its full sequence is SsrA-binding protein (155 aa).

It belongs to the SmpB family.

Its subcellular location is the cytoplasm. Functionally, required for rescue of stalled ribosomes mediated by trans-translation. Binds to transfer-messenger RNA (tmRNA), required for stable association of tmRNA with ribosomes. tmRNA and SmpB together mimic tRNA shape, replacing the anticodon stem-loop with SmpB. tmRNA is encoded by the ssrA gene; the 2 termini fold to resemble tRNA(Ala) and it encodes a 'tag peptide', a short internal open reading frame. During trans-translation Ala-aminoacylated tmRNA acts like a tRNA, entering the A-site of stalled ribosomes, displacing the stalled mRNA. The ribosome then switches to translate the ORF on the tmRNA; the nascent peptide is terminated with the 'tag peptide' encoded by the tmRNA and targeted for degradation. The ribosome is freed to recommence translation, which seems to be the essential function of trans-translation. This is SsrA-binding protein from Streptococcus equi subsp. equi (strain 4047).